We begin with the raw amino-acid sequence, 264 residues long: Rhodanese-like domain-containing protein 4A, chloroplastic (264 aa).

The transit peptide at 1–60 (MTSLPIILASSPLRNLTKPCSTSQIPKPIQNSTKQPPIHLLTKTNLSVTISQLIITSPVL) directs the protein to the chloroplast. A helical membrane pass occupies residues 95–115 (FFVAGCTFTYLVVYPAVMFYL). Positions 132-232 (NESDSQLLDI…ARGKNGWLAI (101 aa)) constitute a Rhodanese domain.

It is found in the plastid. The protein resides in the chloroplast. The protein localises to the membrane. This chain is Rhodanese-like domain-containing protein 4A, chloroplastic (STR4A), found in Arabidopsis thaliana (Mouse-ear cress).